Reading from the N-terminus, the 285-residue chain is Urease accessory protein UreD (285 aa).

The protein belongs to the UreD family. UreD, UreF and UreG form a complex that acts as a GTP-hydrolysis-dependent molecular chaperone, activating the urease apoprotein by helping to assemble the nickel containing metallocenter of UreC. The UreE protein probably delivers the nickel.

The protein resides in the cytoplasm. Functionally, required for maturation of urease via the functional incorporation of the urease nickel metallocenter. This is Urease accessory protein UreD from Cenarchaeum symbiosum (strain A).